The primary structure comprises 574 residues: Adenine deaminase (574 aa).

Belongs to the metallo-dependent hydrolases superfamily. Adenine deaminase family. Mn(2+) is required as a cofactor.

The enzyme catalyses adenine + H2O + H(+) = hypoxanthine + NH4(+). This is Adenine deaminase from Thermosipho melanesiensis (strain DSM 12029 / CIP 104789 / BI429).